The sequence spans 227 residues: 2,3-bisphosphoglycerate-dependent phosphoglycerate mutase (227 aa).

Substrate-binding positions include 8 to 15 (RHGKSVWN), 21 to 22 (TG), R58, 110 to 113 (ERMY), K121, 137 to 138 (RR), and 181 to 182 (GN). H9 (tele-phosphohistidine intermediate) is an active-site residue. E110 serves as the catalytic Proton donor/acceptor.

It belongs to the phosphoglycerate mutase family. BPG-dependent PGAM subfamily.

It catalyses the reaction (2R)-2-phosphoglycerate = (2R)-3-phosphoglycerate. The protein operates within carbohydrate degradation; glycolysis; pyruvate from D-glyceraldehyde 3-phosphate: step 3/5. Catalyzes the interconversion of 2-phosphoglycerate and 3-phosphoglycerate. The chain is 2,3-bisphosphoglycerate-dependent phosphoglycerate mutase from Chlamydia felis (strain Fe/C-56) (Chlamydophila felis).